The primary structure comprises 709 residues: Eukaryotic translation initiation factor 3 subunit B (709 aa).

The sufficient for interaction with HCR1 and TIF32 stretch occupies residues Met1–Asp98. A sufficient for interaction with PIC8 region spans residues Met1–Phe221. The RRM domain maps to Asn37–Asp124.

This sequence belongs to the eIF-3 subunit B family. In terms of assembly, component of the eukaryotic translation initiation factor 3 (eIF-3) complex.

The protein localises to the cytoplasm. In terms of biological role, RNA-binding component of the eukaryotic translation initiation factor 3 (eIF-3) complex, which is involved in protein synthesis of a specialized repertoire of mRNAs and, together with other initiation factors, stimulates binding of mRNA and methionyl-tRNAi to the 40S ribosome. The eIF-3 complex specifically targets and initiates translation of a subset of mRNAs involved in cell proliferation. The protein is Eukaryotic translation initiation factor 3 subunit B of Lodderomyces elongisporus (strain ATCC 11503 / CBS 2605 / JCM 1781 / NBRC 1676 / NRRL YB-4239) (Yeast).